We begin with the raw amino-acid sequence, 407 residues long: Actinorhodin polyketide putative beta-ketoacyl synthase 2 (407 aa).

Residues 1-402 (MSVLITGVGV…GFNSAAVLRR (402 aa)) enclose the Ketosynthase family 3 (KS3) domain.

Belongs to the thiolase-like superfamily. Beta-ketoacyl-ACP synthases family.

This Streptomyces coelicolor (strain ATCC BAA-471 / A3(2) / M145) protein is Actinorhodin polyketide putative beta-ketoacyl synthase 2.